The chain runs to 440 residues: Phosphoglycerate kinase, glycosomal (440 aa).

12 residues coordinate (2R)-3-phosphoglycerate: V23, D24, F25, N26, R39, S61, H62, G64, R65, R135, H171, and R172. Position 217 (G217) interacts with CDP. A218 provides a ligand contact to ADP. Residues A218 and K219 each coordinate AMP. An ATP-binding site is contributed by A218. A218 serves as a coordination point for Mg(2+). Position 219 (K219) interacts with (2R)-3-phosphoglycerate. Residue D222 participates in CDP binding. D222 is a Mg(2+) binding site. 2 residues coordinate ADP: K223 and G241. K223 lines the AMP pocket. G241 contributes to the CDP binding site. Positions 242 and 314 each coordinate AMP. A242 and A314 together coordinate ATP. 2 residues coordinate ADP: A314 and N338. Residues G339 and F344 each contribute to the CDP site. Residues F344, E345, D377, and S378 each contribute to the ADP site. Position 345 (E345) interacts with AMP. Residues D377 and S378 each coordinate ATP. D377 lines the Mg(2+) pocket.

Belongs to the phosphoglycerate kinase family. In terms of assembly, monomer. It depends on Mg(2+) as a cofactor.

It localises to the glycosome. It catalyses the reaction (2R)-3-phosphoglycerate + ATP = (2R)-3-phospho-glyceroyl phosphate + ADP. The protein operates within carbohydrate degradation; glycolysis; pyruvate from D-glyceraldehyde 3-phosphate: step 2/5. This chain is Phosphoglycerate kinase, glycosomal, found in Trypanosoma brucei brucei.